The sequence spans 131 residues: Small ribosomal subunit protein eS6 (131 aa).

It belongs to the eukaryotic ribosomal protein eS6 family.

This chain is Small ribosomal subunit protein eS6, found in Halobacterium salinarum (strain ATCC 29341 / DSM 671 / R1).